The chain runs to 261 residues: Small ribosomal subunit protein uS2 (261 aa).

This sequence belongs to the universal ribosomal protein uS2 family.

The chain is Small ribosomal subunit protein uS2 from Rhodospirillum centenum (strain ATCC 51521 / SW).